A 422-amino-acid polypeptide reads, in one-letter code: Glyceraldehyde-3-phosphate dehydrogenase GAPCP1, chloroplastic (422 aa).

Residues 1–69 constitute a chloroplast transit peptide; that stretch reads MAFSSLLRSA…NARSVQPIKA (69 aa). Residues 50–63 show a composition bias toward polar residues; it reads SGISSSLQNGNARS. The disordered stretch occupies residues 50-84; sequence SGISSSLQNGNARSVQPIKATATEVPSAVRRSSSS. Thr-70 is subject to N-acetylthreonine. NAD(+)-binding positions include 96 to 97, Asp-118, and Arg-164; that span reads RI. Residues 235 to 237, Thr-266, 295 to 296, and Arg-318 each bind D-glyceraldehyde 3-phosphate; these read SCT and TG. Cys-236 serves as the catalytic Nucleophile. Asn-400 contacts NAD(+).

Belongs to the glyceraldehyde-3-phosphate dehydrogenase family. Homotetramer. In terms of tissue distribution, expressed in shoot and root vasculature, leaf veins and vascular tissue of flowers and siliques.

The protein resides in the plastid. It localises to the chloroplast stroma. The enzyme catalyses D-glyceraldehyde 3-phosphate + phosphate + NAD(+) = (2R)-3-phospho-glyceroyl phosphate + NADH + H(+). Involved in plastidial glycolytic pathway and plays a specific role in glycolytic energy production in non-green plastids and chloroplasts. Essential for breakdown of starch to form sucrose for export to non-photosynthetic tissues, and to generate primary metabolites for anabolic pathways such as fatty acid and amino acid synthesis. Plays an important role in plant development by providing substrates for the phosphorylated pathway of serine biosynthesis in roots. Plays a crucial role in pollen development. Functionally redundant with GAPCP2. This chain is Glyceraldehyde-3-phosphate dehydrogenase GAPCP1, chloroplastic (GAPCP1), found in Arabidopsis thaliana (Mouse-ear cress).